Reading from the N-terminus, the 343-residue chain is Fructose-1,6-bisphosphatase class 1 (343 aa).

Mg(2+)-binding residues include Glu90, Asp109, Leu111, and Asp112. Substrate contacts are provided by residues 112–115 (DGSS) and Asn199. Glu271 contributes to the Mg(2+) binding site.

The protein belongs to the FBPase class 1 family. Homotetramer. Mg(2+) is required as a cofactor.

It localises to the cytoplasm. It carries out the reaction beta-D-fructose 1,6-bisphosphate + H2O = beta-D-fructose 6-phosphate + phosphate. It functions in the pathway carbohydrate biosynthesis; Calvin cycle. This Rhodopseudomonas palustris (strain ATCC BAA-98 / CGA009) protein is Fructose-1,6-bisphosphatase class 1.